We begin with the raw amino-acid sequence, 181 residues long: Large ribosomal subunit protein uL6 (181 aa).

This sequence belongs to the universal ribosomal protein uL6 family. Part of the 50S ribosomal subunit.

In terms of biological role, this protein binds to the 23S rRNA, and is important in its secondary structure. It is located near the subunit interface in the base of the L7/L12 stalk, and near the tRNA binding site of the peptidyltransferase center. This Vesicomyosocius okutanii subsp. Calyptogena okutanii (strain HA) protein is Large ribosomal subunit protein uL6.